A 1028-amino-acid chain; its full sequence is Protein SMAX1-LIKE 5 (1028 aa).

A Clp R domain is found at 8 to 199; sequence IQQTLTTEAA…CVEDCSVSSV (192 aa). Repeat stretches follow at residues 12–102 and 116–199; these read LTTE…LNRL and LANA…VSSV. The EAR motif lies at 871–875; it reads LDLNI.

The protein belongs to the ClpA/ClpB family. As to quaternary structure, interacts probably with TPL/TPR in an EAR-motif dependent manner. Detected in roots, seedlings and axillary branches.

Functionally, may function in a transcriptional corepressor complex. This is Protein SMAX1-LIKE 5 from Arabidopsis thaliana (Mouse-ear cress).